The following is a 489-amino-acid chain: UDP-N-acetylmuramoylalanine--D-glutamate ligase (489 aa).

126–132 (GTNGKTT) contributes to the ATP binding site.

This sequence belongs to the MurCDEF family.

The protein localises to the cytoplasm. The catalysed reaction is UDP-N-acetyl-alpha-D-muramoyl-L-alanine + D-glutamate + ATP = UDP-N-acetyl-alpha-D-muramoyl-L-alanyl-D-glutamate + ADP + phosphate + H(+). It participates in cell wall biogenesis; peptidoglycan biosynthesis. Cell wall formation. Catalyzes the addition of glutamate to the nucleotide precursor UDP-N-acetylmuramoyl-L-alanine (UMA). In Mycolicibacterium paratuberculosis (strain ATCC BAA-968 / K-10) (Mycobacterium paratuberculosis), this protein is UDP-N-acetylmuramoylalanine--D-glutamate ligase.